Consider the following 443-residue polypeptide: ATP-dependent protease ATPase subunit HslU (443 aa).

ATP is bound by residues Ile-19, 61–66, Asp-256, Glu-321, and Arg-393; that span reads GVGKTE.

The protein belongs to the ClpX chaperone family. HslU subfamily. As to quaternary structure, a double ring-shaped homohexamer of HslV is capped on each side by a ring-shaped HslU homohexamer. The assembly of the HslU/HslV complex is dependent on binding of ATP.

It localises to the cytoplasm. Its function is as follows. ATPase subunit of a proteasome-like degradation complex; this subunit has chaperone activity. The binding of ATP and its subsequent hydrolysis by HslU are essential for unfolding of protein substrates subsequently hydrolyzed by HslV. HslU recognizes the N-terminal part of its protein substrates and unfolds these before they are guided to HslV for hydrolysis. The sequence is that of ATP-dependent protease ATPase subunit HslU from Ralstonia pickettii (strain 12J).